The following is a 362-amino-acid chain: Phosphatidylserine decarboxylase proenzyme (362 aa).

The helical transmembrane segment at 26 to 44 threads the bilayer; sequence YLLTGVTILSFIFMFQYKY. Residues Asp-147, His-206, and Ser-316 each act as charge relay system; for autoendoproteolytic cleavage activity in the active site. Ser-316 functions as the Schiff-base intermediate with substrate; via pyruvic acid; for decarboxylase activity in the catalytic mechanism. Ser-316 is modified (pyruvic acid (Ser); by autocatalysis).

The protein belongs to the phosphatidylserine decarboxylase family. PSD-B subfamily. Eukaryotic type I sub-subfamily. As to quaternary structure, heterodimer of a large membrane-associated beta subunit and a small pyruvoyl-containing alpha subunit. Pyruvate serves as cofactor. Post-translationally, is synthesized initially as an inactive proenzyme. Formation of the active enzyme involves a self-maturation process in which the active site pyruvoyl group is generated from an internal serine residue via an autocatalytic post-translational modification. Two non-identical subunits are generated from the proenzyme in this reaction, and the pyruvate is formed at the N-terminus of the alpha chain, which is derived from the carboxyl end of the proenzyme. The autoendoproteolytic cleavage occurs by a canonical serine protease mechanism, in which the side chain hydroxyl group of the serine supplies its oxygen atom to form the C-terminus of the beta chain, while the remainder of the serine residue undergoes an oxidative deamination to produce ammonia and the pyruvoyl prosthetic group on the alpha chain. During this reaction, the Ser that is part of the protease active site of the proenzyme becomes the pyruvoyl prosthetic group, which constitutes an essential element of the active site of the mature decarboxylase.

Its subcellular location is the endoplasmic reticulum membrane. It catalyses the reaction a 1,2-diacyl-sn-glycero-3-phospho-L-serine + H(+) = a 1,2-diacyl-sn-glycero-3-phosphoethanolamine + CO2. It participates in phospholipid metabolism; phosphatidylethanolamine biosynthesis; phosphatidylethanolamine from CDP-diacylglycerol: step 2/2. Its function is as follows. Catalyzes the formation of phosphatidylethanolamine (PtdEtn) from phosphatidylserine (PtdSer). Plays a central role in phospholipid metabolism and in the interorganelle trafficking of phosphatidylserine. This is Phosphatidylserine decarboxylase proenzyme from Plasmodium falciparum.